Reading from the N-terminus, the 287-residue chain is Iodotyrosine deiodinase (287 aa).

A helical membrane pass occupies residues His15 to Phe34. Residues Arg96–Arg100, Ser125, and Ser125–Gly126 each bind FMN. Ala127, Glu154, Tyr158, and Lys179 together coordinate 3,5-diiodo-L-tyrosine. 3-iodo-L-tyrosine is bound by residues Ala127, Glu154, Tyr158, and Lys179. FMN is bound by residues Val235 to Thr237 and Arg277.

Belongs to the nitroreductase family. As to quaternary structure, homodimer. FMN serves as cofactor. In terms of tissue distribution, expressed in spermatocytes.

The protein resides in the cell membrane. The catalysed reaction is 2 iodide + L-tyrosine + 2 NADP(+) = 3,5-diiodo-L-tyrosine + 2 NADPH + H(+). The enzyme catalyses iodide + L-tyrosine + NADP(+) = 3-iodo-L-tyrosine + NADPH. It carries out the reaction 3-iodo-L-tyrosine + iodide + NADP(+) = 3,5-diiodo-L-tyrosine + NADPH + H(+). It catalyses the reaction L-tyrosine + chloride + NADP(+) = 3-chloro-L-tyrosine + NADPH. The catalysed reaction is bromide + L-tyrosine + NADP(+) = 3-bromo-L-tyrosine + NADPH. Its function is as follows. Catalyzes the dehalogenation of halotyrosines such as 3-bromo-L-tyrosine, 3-chloro-L-tyrosine, 3-iodo-L-tyrosine and 3,5-diiodo-L-tyrosine. Activity towards 3-fluoro-L-tyrosine is weak. Important for male and female fertility. May be involved in maintaining the viability of sperm, both during development in the testes and storage in the female spermatheca. This chain is Iodotyrosine deiodinase, found in Drosophila melanogaster (Fruit fly).